We begin with the raw amino-acid sequence, 778 residues long: uncharacterized protein (778 aa).

In terms of domain architecture, PE spans 1–92 (MSFVIAVPEA…GARSYVVAEA (92 aa)). Disordered stretches follow at residues 125–163 (ADGTGAPGGPGGLLLGNGGNGGSGAPGQPGGAGGDAGLI), 372–510 (TGLA…GDAF), and 718–778 (QGGL…GADG). Gly residues-rich tracts occupy residues 402–429 (NQTGGNGGPGPAGGVGEAGGVGGQGGLG), 436–510 (DGTG…GDAF), and 718–763 (QGGL…GSSG).

It belongs to the mycobacterial PE family. PGRS subfamily.

This is an uncharacterized protein from Mycobacterium tuberculosis (strain CDC 1551 / Oshkosh).